The following is a 178-amino-acid chain: GTP-dependent dephospho-CoA kinase (178 aa).

Positions 55, 57, 74, 76, and 127 each coordinate GTP.

Belongs to the GTP-dependent DPCK family.

The enzyme catalyses 3'-dephospho-CoA + GTP = GDP + CoA + H(+). Its pathway is cofactor biosynthesis; coenzyme A biosynthesis. Its function is as follows. Catalyzes the GTP-dependent phosphorylation of the 3'-hydroxyl group of dephosphocoenzyme A to form coenzyme A (CoA). In Saccharolobus islandicus (strain Y.G.57.14 / Yellowstone #1) (Sulfolobus islandicus), this protein is GTP-dependent dephospho-CoA kinase.